A 1336-amino-acid chain; its full sequence is Zinc finger protein 335 (1336 aa).

Disordered regions lie at residues 1–108 (MEEN…LVHS) and 199–222 (PTSTSTCLEPAEQPPGEPSSLAQP). 2 stretches are compositionally biased toward low complexity: residues 31-45 (TSEAVSADSTDAATA) and 54-65 (SGVGQSSDSGSR). The C2H2-type 1 zinc finger occupies 247-270 (FKCKMCQYRSSTKATLLRHMRERH). 2 disordered regions span residues 282-398 (AGKR…PSSS) and 415-442 (VSQSDAENAAPSCQDEADVPPRRRGRPS). Residues 300-331 (EEGPEEEEEDDDIVDAGAIDDLEEDSDYNPAE) are compositionally biased toward acidic residues. The span at 339-349 (LRLQRPTPSTL) shows a compositional bias: low complexity. Residues 350–361 (RPRRRPGRPRKL) are compositionally biased toward basic residues. Basic and acidic residues predominate over residues 362-373 (PRLETSDLHDGI). Residues 378–387 (VSSQSTQSPP) are compositionally biased toward polar residues. 8 consecutive C2H2-type zinc fingers follow at residues 465-487 (YLCRICGSRFLSHEDLRFHVNSH), 495-517 (FKCLQCSYRSRRWSSLKEHMFNH), 523-545 (YKCDECSYTSVYRKDVIRHAAVH), 562-584 (FPCPVCGRVYPMQKRLTQHMKTH), 590-612 (HMCDKCGKSFKKRYTFKMHLLTH), 621-643 (FKCEFCEFVCEDKKALLNHQLSH), 649-672 (FKCSFCPYRTFREDFLLSHVAVKH), and 678-701 (FACEYCHFSTRHKKNLRLHVRCRH). 2 disordered regions span residues 732-766 (LKQQHSAAPGPPLSSAGPEAPQEPAPFQPPETPPL) and 961-1013 (LQCG…AAAS). The segment covering 752-766 (PQEPAPFQPPETPPL) has biased composition (pro residues). Phosphoserine occurs at positions 975 and 1006. 4 consecutive C2H2-type zinc fingers follow at residues 1018 to 1040 (FSCKVCSEAFPSRAEMESHKRAH), 1046 to 1068 (FKCPDCPFSARQWPEVRAHMAQH), 1074 to 1096 (HQCNQCSFASKNKKDLRRHMLTH), and 1102 to 1125 (FSCHVCGQRFNRNGHLKFHIQRLH). A Glycyl lysine isopeptide (Lys-Gly) (interchain with G-Cter in SUMO2) cross-link involves residue lysine 1021. At serine 1148 the chain carries Phosphoserine.

The protein belongs to the krueppel C2H2-type zinc-finger protein family. As to quaternary structure, interacts with NCOA6; may enhance ligand-dependent transcriptional activation by nuclear hormone receptors. Interacts with CNOT6. Interacts with CNOT9; the interaction is direct. Component of a nuclear receptor-mediated transcription complex composed of at least ZNF335, CCAR2 and EMSY; the complex stimulates the transcription of nuclear receptor target genes such as SOX9 and HOXA1. Within the complex interacts with EMSY and interacts (via C-terminus) with CCAR2. Interacts with members of histone H3'Lys4'(H3K4) methyltransferase complexes ASH2L, CXXC1, KMT2A/MLL1, RBBP5, SETD1A and WDR5. Component of a histone methylation complex composed of at least ZNF335, RBBP5, ASH2L and WDR5; the complex may have histone H3-specific methyltransferase activity, however does not have specificity for 'Lys-4' of histone H3. Interacts with RBBP5 and WDR5. Interacts with ASHL2. Components of this complex may associate with components of the ZNF335-CCAR2-EMSY nuclear receptor-mediated transcription complex to form a complex at least composed of ZNF335, HCFC1, CCAR2, EMSY, MKI67, RBBP5, ASH2L and WDR5. Within this complex also interacts with HCFC1 and MKI67.

The protein resides in the nucleus. Its function is as follows. Component or associated component of some histone methyltransferase complexes may regulate transcription through recruitment of those complexes on gene promoters. Enhances ligand-dependent transcriptional activation by nuclear hormone receptors. Plays an important role in neural progenitor cell proliferation and self-renewal through the regulation of specific genes involved brain development, including REST. Also controls the expression of genes involved in somatic development and regulates, for instance, lymphoblast proliferation. In Rattus norvegicus (Rat), this protein is Zinc finger protein 335 (Znf335).